The following is a 1020-amino-acid chain: Phosphatidylinositol 3-kinase VPS34 (1020 aa).

The 162-residue stretch at 49-210 folds into the C2 PI3K-type domain; the sequence is LSTKFEDPTV…NWLDKMVLPK (162 aa). Residues 331–577 enclose the PIK helical domain; sequence DKELKPTPQL…DGPIKIYMDI (247 aa). The region spanning 666 to 1004 is the PI3K/PI4K catalytic domain; it reads YPEESSVFKS…LINDSVNAFL (339 aa). Positions 672–678 are G-loop; that stretch reads VFKSSLA. Positions 873-881 are catalytic loop; the sequence is GVGDRHLDN. The tract at residues 892-913 is activation loop; that stretch reads HADFGYILGRDPKPFPPLMKLP.

Belongs to the PI3/PI4-kinase family. In terms of assembly, component of the autophagy-specific VPS34 PI3-kinase complex I composed of at least VPS15, VPS30, VPS34, and of the VPS34 PI3-kinase complex II composed of VPS15, VPS30, VPS34 and VPS38. Interacts with VMNA7. Autophosphorylated.

Its subcellular location is the golgi apparatus. The protein localises to the trans-Golgi network membrane. It is found in the endosome membrane. It catalyses the reaction a 1,2-diacyl-sn-glycero-3-phospho-(1D-myo-inositol) + ATP = a 1,2-diacyl-sn-glycero-3-phospho-(1D-myo-inositol-3-phosphate) + ADP + H(+). Functionally, multifunctional phosphatidylinositol 3-kinase involved in acidification of vacuoles, pH-dependent cell growth, and autophagocytosis. Plays an important role in protein transport and virulence. Component of the autophagy-specific VPS34 PI3-kinase complex I essential to recruit the ATG8-phosphatidylinositol conjugate and the ATG12-ATG5 conjugate to the pre-autophagosomal structure. Also involved in endosome-to-Golgi retrograde transport as part of the VPS34 PI3-kinase complex II. This second complex is required for the endosome-to-Golgi retrieval of PEP1 and KEX2, and the recruitment of VPS5 and VPS7, two components of the retromer complex, to endosomal membranes (probably through the synthesis of a specific pool of phosphatidylinositol 3-phosphate recruiting the retromer to the endosomes). Finally, it might also be involved in ethanol tolerance and cell wall integrity. This is Phosphatidylinositol 3-kinase VPS34 from Candida albicans (Yeast).